We begin with the raw amino-acid sequence, 130 residues long: Arginine decarboxylase proenzyme (130 aa).

S78 (schiff-base intermediate with substrate; via pyruvic acid) is an active-site residue. At S78 the chain carries Pyruvic acid (Ser); by autocatalysis. H83 acts as the Proton acceptor; for processing activity in catalysis. The active-site Proton donor; for catalytic activity is the C98.

This sequence belongs to the prokaryotic AdoMetDC family. Type 1 subfamily. As to quaternary structure, heterooctamer of four alpha and four beta chains arranged as a tetramer of alpha/beta heterodimers. The cofactor is pyruvate. In terms of processing, is synthesized initially as an inactive proenzyme. Formation of the active enzyme involves a self-maturation process in which the active site pyruvoyl group is generated from an internal serine residue via an autocatalytic post-translational modification. Two non-identical subunits are generated from the proenzyme in this reaction, and the pyruvate is formed at the N-terminus of the alpha chain, which is derived from the carboxyl end of the proenzyme. The post-translation cleavage follows an unusual pathway, termed non-hydrolytic serinolysis, in which the side chain hydroxyl group of the serine supplies its oxygen atom to form the C-terminus of the beta chain, while the remainder of the serine residue undergoes an oxidative deamination to produce ammonia and the pyruvoyl group blocking the N-terminus of the alpha chain.

It carries out the reaction L-arginine + H(+) = agmatine + CO2. It functions in the pathway amine and polyamine biosynthesis; agmatine biosynthesis; agmatine from L-arginine: step 1/1. Functionally, specifically catalyzes the decarboxylation of L-arginine to agmatine. Has no S-adenosylmethionine decarboxylase (AdoMetDC) activity. The protein is Arginine decarboxylase proenzyme of Sulfolobus acidocaldarius (strain ATCC 33909 / DSM 639 / JCM 8929 / NBRC 15157 / NCIMB 11770).